Reading from the N-terminus, the 222-residue chain is Protein-L-isoaspartate O-methyltransferase (222 aa).

S69 is a catalytic residue.

This sequence belongs to the methyltransferase superfamily. L-isoaspartyl/D-aspartyl protein methyltransferase family.

Its subcellular location is the cytoplasm. It carries out the reaction [protein]-L-isoaspartate + S-adenosyl-L-methionine = [protein]-L-isoaspartate alpha-methyl ester + S-adenosyl-L-homocysteine. Its function is as follows. Catalyzes the methyl esterification of L-isoaspartyl residues in peptides and proteins that result from spontaneous decomposition of normal L-aspartyl and L-asparaginyl residues. It plays a role in the repair and/or degradation of damaged proteins. This Caulobacter vibrioides (strain NA1000 / CB15N) (Caulobacter crescentus) protein is Protein-L-isoaspartate O-methyltransferase.